A 482-amino-acid chain; its full sequence is MLRTRGPGSILDPPLGGRREAIERELKKLRAEREELDGRIRLLESQLEAGPAGFNGAAAGKGVGDDACGGSGACQSRVGNGFAPDGSLPADMIYRYSRHLLLPDFGVEGQRKLSQSSILVVGAGGLGSPLALYLAACGVGCLGIVDGDDVELNNLHRQIIHKEAYVGQSKVKSAADACREINSAIKVVEHHHTLKPCNALEIARKYDIVVDATDNLPTRYMISDCCVLLNKPLVSGAALGLEGQLTVYHHNGSPCYRCLFPTPPPVAACQRCSDSGVLGVVPGVIGCLQALEAIKVATGVGEPLCGRMLLFDALSARIRVVKLRGSSPDCTHCGENSVFTEEDFQKFDYESFTQSPMSDKAAASVNVLPESARITCREYKKLADDGEPHLLLDVRPAHHFQIASISPSHNIPLSMLEEKLPALEASLKEAGEGSALVVLCRRGNDSQRAVQLLREKGFANAKDIIGGLQAWGQDVDPDFPVY.

Residues glycine 125, aspartate 146, asparagine 153–arginine 157, lysine 170, and aspartate 214–asparagine 215 each bind ATP. Positions 255 and 258 each coordinate Zn(2+). The Glycyl thioester intermediate; for adenylyltransferase activity role is filled by cysteine 272. The Zn(2+) site is built by cysteine 330 and cysteine 333. Residues aspartate 385 to proline 480 enclose the Rhodanese domain. The active-site Cysteine persulfide intermediate; for sulfurtransferase activity is the cysteine 440.

It in the N-terminal section; belongs to the HesA/MoeB/ThiF family. UBA4 subfamily. It depends on Zn(2+) as a cofactor.

It is found in the cytoplasm. It catalyses the reaction [molybdopterin-synthase sulfur-carrier protein]-C-terminal Gly-Gly + ATP + H(+) = [molybdopterin-synthase sulfur-carrier protein]-C-terminal Gly-Gly-AMP + diphosphate. It carries out the reaction [molybdopterin-synthase sulfur-carrier protein]-C-terminal Gly-Gly-AMP + S-sulfanyl-L-cysteinyl-[cysteine desulfurase] + AH2 = [molybdopterin-synthase sulfur-carrier protein]-C-terminal-Gly-aminoethanethioate + L-cysteinyl-[cysteine desulfurase] + A + AMP + 2 H(+). It participates in tRNA modification; 5-methoxycarbonylmethyl-2-thiouridine-tRNA biosynthesis. The protein operates within cofactor biosynthesis; molybdopterin biosynthesis. Plays a central role in 2-thiolation of mcm(5)S(2)U at tRNA wobble positions of cytosolic tRNA(Lys), tRNA(Glu) and tRNA(Gln). Also essential during biosynthesis of the molybdenum cofactor. Acts by mediating the C-terminal thiocarboxylation of sulfur carriers URM1 and MOCS2A. Its N-terminus first activates URM1 and MOCS2A as acyl-adenylates (-COAMP), then the persulfide sulfur on the catalytic cysteine is transferred to URM1 and MOCS2A to form thiocarboxylation (-COSH) of their C-terminus. The reaction probably involves hydrogen sulfide that is generated from the persulfide intermediate and that acts as a nucleophile towards URM1 and MOCS2A. Subsequently, a transient disulfide bond is formed. Does not use thiosulfate as sulfur donor; NFS1 probably acting as a sulfur donor for thiocarboxylation reactions. The sequence is that of Adenylyltransferase and sulfurtransferase MOCS3-2 from Zea mays (Maize).